Reading from the N-terminus, the 320-residue chain is Cytochrome f (320 aa).

The first 35 residues, 1-35, serve as a signal peptide directing secretion; sequence MENRNTFSWVKEQITRSISVSIMIYVITRTSISNA. Positions 36, 56, 59, and 60 each coordinate heme. Residues 286 to 306 form a helical membrane-spanning segment; the sequence is VQGLLFFFASVILAQVFLVLK.

This sequence belongs to the cytochrome f family. As to quaternary structure, the 4 large subunits of the cytochrome b6-f complex are cytochrome b6, subunit IV (17 kDa polypeptide, petD), cytochrome f and the Rieske protein, while the 4 small subunits are PetG, PetL, PetM and PetN. The complex functions as a dimer. Heme serves as cofactor.

The protein resides in the plastid. Its subcellular location is the chloroplast thylakoid membrane. In terms of biological role, component of the cytochrome b6-f complex, which mediates electron transfer between photosystem II (PSII) and photosystem I (PSI), cyclic electron flow around PSI, and state transitions. The chain is Cytochrome f from Hordeum vulgare (Barley).